Consider the following 211-residue polypeptide: UPF0502 protein PC1_1804 (211 aa).

Residues 168 to 188 (SGDASDAAPEEEGAGDNSHQL) form a disordered region.

Belongs to the UPF0502 family.

The sequence is that of UPF0502 protein PC1_1804 from Pectobacterium carotovorum subsp. carotovorum (strain PC1).